A 369-amino-acid polypeptide reads, in one-letter code: MPSQSPYHALSRYFSFPNRDHQAWWTGKGPLLGNMLADAGYPEQQQYQYLTLFNLHLIPALGPSESHGAGIDGAEWKSLLSGSGKLEFSMTYRKSAVSLRIAFEPTSLLAGTKKDVFNKRRTQQLLGDLERLDIDIDTVLYHPLFDTLVVSDEEEAALQNAGTVIPDSSRTQQLLALNLIEGNVRADLYVYPYVKALATGTASSTLLWAAVKKIDRYNRFRDALSILKGYFETYPSSTTNPMFLSSDLAAPRNAFCRLFFSETNFSWERVQHLWTLGGTLSDKPTLKGLELAKILWDILGISTAPASPDSFPLLFTFELRPEQPYLRQKLGIPVSGLTESAIANACVAFFERLGWDDHAASYRTNLSAY.

Position 87 (Glu-87) interacts with substrate. Positions 100 and 189 each coordinate dimethylallyl diphosphate. Tyr-191 serves as a coordination point for substrate.

Belongs to the tryptophan dimethylallyltransferase family.

Prenyltransferase; part of the gene cluster that mediates the biosynthesis of malbrancheamide, a dichlorinated fungal indole alkaloid that belongs to a family of natural products containing a characteristic bicyclo[2.2.2]diazaoctane core. The first step of malbrancheamide biosynthesis involves coupling of L-proline and L-tryptophan by malG, a bimodular NRPS, to produce L-Pro-L-Trp aldehyde through reductive offloading. This compound undergoes spontaneous cyclization and dehydration to give a dienamine which is reverse prenylated at C-2 by malE. The other prenyltransferase present in the cluster, malB, displays modest activity, suggesting that may be a redundant gene in the pathway. Subsequently, a [4+2] Diels-Alder cyclo-addition catalyzed by the bifunctional enzyme malC forms the characteristic bicyclo[2.2.2]diazaoctane ring of premalbrancheamid. Finally, the flavin-dependent halogenase malA catalyzes the iterative dichlorination of the indole ring of premalbrancheamide to yield C-9 monochlorinated malbrancheamide B, C-8 monochlorinated isomalbrancheamide B, and dichlorinated malbrancheamide. MalA is also able to brominate premalbrancheamide at C-9 to yield malbrancheamide C, and, to a lesser extend, at C-8 to yield isomalbrancheamide C. Finally, malA can brominate C-9 monochlorinated malbrancheamide B at C-8 to yield malbrancheamide D, or C-8 monochlorinated isomalbrancheamide B at C-9 to produce isomalbrancheamide D. In Malbranchea aurantiaca, this protein is Prenyltransferase malB.